Reading from the N-terminus, the 202-residue chain is Hypoxanthine-guanine phosphoribosyltransferase (202 aa).

2 residues coordinate diphosphate: K66 and G67. The Mg(2+) site is built by E122 and D123. D126 (proton acceptor) is an active-site residue. Residues K154, 175-176 (FV), and D182 each bind GMP. A diphosphate-binding site is contributed by R188.

It belongs to the purine/pyrimidine phosphoribosyltransferase family. The cofactor is Mg(2+).

It is found in the cytoplasm. The enzyme catalyses IMP + diphosphate = hypoxanthine + 5-phospho-alpha-D-ribose 1-diphosphate. It catalyses the reaction GMP + diphosphate = guanine + 5-phospho-alpha-D-ribose 1-diphosphate. It participates in purine metabolism; IMP biosynthesis via salvage pathway; IMP from hypoxanthine: step 1/1. The protein operates within purine metabolism; GMP biosynthesis via salvage pathway; GMP from guanine: step 1/1. Functionally, purine salvage pathway enzyme that catalyzes the transfer of the ribosyl-5-phosphate group from 5-phospho-alpha-D-ribose 1-diphosphate (PRPP) to the N9 position of the 6-oxopurines hypoxanthine and guanine to form the corresponding ribonucleotides IMP (inosine 5'-monophosphate) and GMP (guanosine 5'-monophosphate), with the release of PPi. This chain is Hypoxanthine-guanine phosphoribosyltransferase (hpt), found in Mycobacterium tuberculosis (strain CDC 1551 / Oshkosh).